We begin with the raw amino-acid sequence, 216 residues long: GTP-binding nuclear protein Ran, testis-specific isoform (216 aa).

Ala-2 carries the post-translational modification N-acetylalanine. Positions 7-171 (PQVQFKVVLV…FWLARKLIGD (165 aa)) constitute a Small GTPase Ran-type domain. 17 to 24 (GDGGTGKT) lines the GTP pocket. Thr-24 is subject to Phosphothreonine. Residues 37 to 45 (KEYVATLGV) form a switch-I region. An N6-acetyllysine modification is found at Lys-60. 65 to 69 (DTAGQ) is a GTP binding site. The segment at 68 to 84 (GQEKFGGLRDGYYIQAQ) is switch-II. An N6-acetyllysine; alternate modification is found at Lys-71. Lys-71 participates in a covalent cross-link: Glycyl lysine isopeptide (Lys-Gly) (interchain with G-Cter in SUMO2); alternate. Residue Lys-71 forms a Glycyl lysine isopeptide (Lys-Gly) (interchain with G-Cter in ubiquitin); alternate linkage. At Lys-99 the chain carries N6-acetyllysine. Residue 122–125 (NKVD) coordinates GTP. N6-acetyllysine is present on Lys-134. At Lys-159 the chain carries N6-acetyllysine; alternate. N6-succinyllysine; alternate is present on Lys-159.

Belongs to the small GTPase superfamily. Ran family. As to expression, testis specific.

The protein resides in the nucleus. It catalyses the reaction GTP + H2O = GDP + phosphate + H(+). Functionally, GTP-binding protein involved in nucleocytoplasmic transport. Required for the import of protein into the nucleus and also for RNA export. Involved in chromatin condensation and control of cell cycle. This chain is GTP-binding nuclear protein Ran, testis-specific isoform (Rasl2-9), found in Mus musculus (Mouse).